The following is a 288-amino-acid chain: Quinate/shikimate dehydrogenase (288 aa).

Substrate contacts are provided by Lys-71 and Asp-107. Residues 132–135 (AGGA), 155–158 (NRKD), Lys-205, 232–235 (CVYN), and Gly-255 each bind NAD(+).

This sequence belongs to the shikimate dehydrogenase family. In terms of assembly, homodimer.

The enzyme catalyses L-quinate + NAD(+) = 3-dehydroquinate + NADH + H(+). It carries out the reaction L-quinate + NADP(+) = 3-dehydroquinate + NADPH + H(+). It catalyses the reaction shikimate + NADP(+) = 3-dehydroshikimate + NADPH + H(+). The catalysed reaction is shikimate + NAD(+) = 3-dehydroshikimate + NADH + H(+). It participates in metabolic intermediate biosynthesis; chorismate biosynthesis; chorismate from D-erythrose 4-phosphate and phosphoenolpyruvate: step 4/7. Functionally, the actual biological function of YdiB remains unclear, nor is it known whether 3-dehydroshikimate or quinate represents the natural substrate. Catalyzes the reversible NAD-dependent reduction of both 3-dehydroshikimate (DHSA) and 3-dehydroquinate to yield shikimate (SA) and quinate, respectively. It can use both NAD or NADP for catalysis, however it has higher catalytic efficiency with NAD. This chain is Quinate/shikimate dehydrogenase, found in Salmonella agona (strain SL483).